The sequence spans 360 residues: Chorismate synthase (360 aa).

NADP(+)-binding residues include arginine 48 and arginine 54. FMN-binding positions include 125–127 (RSS), 246–247 (NA), glycine 286, 301–305 (KPTSS), and arginine 327.

The protein belongs to the chorismate synthase family. As to quaternary structure, homotetramer. Requires FMNH2 as cofactor.

It catalyses the reaction 5-O-(1-carboxyvinyl)-3-phosphoshikimate = chorismate + phosphate. The protein operates within metabolic intermediate biosynthesis; chorismate biosynthesis; chorismate from D-erythrose 4-phosphate and phosphoenolpyruvate: step 7/7. Functionally, catalyzes the anti-1,4-elimination of the C-3 phosphate and the C-6 proR hydrogen from 5-enolpyruvylshikimate-3-phosphate (EPSP) to yield chorismate, which is the branch point compound that serves as the starting substrate for the three terminal pathways of aromatic amino acid biosynthesis. This reaction introduces a second double bond into the aromatic ring system. This chain is Chorismate synthase, found in Actinobacillus succinogenes (strain ATCC 55618 / DSM 22257 / CCUG 43843 / 130Z).